The chain runs to 460 residues: MPLSATADTSKTVKLERYNSYLRKIHSTKVLNASSKVLFRATLLVALVLVLIFAINYPPLSDSRAAAAHHLHRRSFLSTGLFSSSSSSSSIGGAAWEKRVRQSSTAKRPHGLSVLVTGAAGFVGSHCSLALRKRGDGVLGFDNFNDYYDPSLKRARQELLEKQQVFIVEGDLNDGPLLRKLFDVVPFTHILHLAAQAGVRYAMKNPQSYIASNIAGFVNLLEVAKAANPQPAIVWASSSSVYGLNTENPFSEEHRTDQPASLYAATKKAGEEIAHTYNHIYGLSLTGLRFFTVYGPWGRPDMAYFFFTKDILHGKSIDIYRTQDNQEVARDFTYIDDIVKGCVGALDTAEKSTGSGGKKRGQAQLRVYNLGNTSPVPVGRLVSILEGLLGTKAKKHLIKMPRNGDVPYTHANVSLAYKDFGYKPTTDLAAGLRKFVKWYVGYYGIQPRVKKETSHAEDSA.

2 consecutive transmembrane segments (helical) span residues Ala41–Ser61 and Gly111–Leu131. Position 113–144 (Ser113–Phe144) interacts with NAD(+). Catalysis depends on Tyr263, which acts as the Proton acceptor.

It belongs to the NAD(P)-dependent epimerase/dehydratase family. Homodimer. As to expression, in roots, leaf veins, siliques, flowers, pollen and stems.

The protein localises to the golgi apparatus. It localises to the golgi stack membrane. It catalyses the reaction UDP-alpha-D-glucuronate = UDP-alpha-D-galacturonate. Its function is as follows. Involved in the synthesis of the negatively charged monosaccharide that forms the backbone of pectic cell wall components. This chain is UDP-glucuronate 4-epimerase 6 (GAE6), found in Arabidopsis thaliana (Mouse-ear cress).